The chain runs to 3477 residues: Abnormal spindle-like microcephaly-associated protein homolog (3477 aa).

The interval M1–S34 is disordered. Residues S283, S367, S392, and S425 each carry the phosphoserine modification. Residues N417–E433 are compositionally biased toward polar residues. Disordered regions lie at residues N417 to P436 and M563 to D583. Position 605 is a phosphoserine (S605). Residues K920 to Q1056 form the Calponin-homology (CH) 1 domain. A coiled-coil region spans residues V1057 to T1076. S1103 carries the phosphoserine modification. Residues S1110–L1261 form the Calponin-homology (CH) 2 domain. 39 consecutive IQ domains span residues Q1347–Q1378, Y1393–S1422, L1582–Q1613, M1605–S1634, T1632–K1661, I1655–K1684, M1728–S1757, Q1751–Q1782, V1801–K1830, Q1824–K1853, T1874–K1903, E1897–Q1928, L1947–Q1978, Q1970–Q2001, T2020–T2049, C2043–Q2074, L2093–K2124, M2116–Q2147, L2239–Q2270, M2262–Q2293, V2311–Q2342, M2334–Q2365, Q2384–Q2415, M2407–Q2438, L2457–Q2488, M2480–Q2511, Q2530–Q2561, Q2624–S2653, R2665–Q2696, M2688–Q2719, V2738–A2767, Q2814–F2845, Q2859–Q2890, I2909–K2938, I2932–A2963, K2954–Q2985, R3029–Q3060, F3079–H3110, and F3204–S3235.

The protein localises to the cytoplasm. It is found in the cytoskeleton. Its subcellular location is the spindle. The protein resides in the nucleus. Functionally, probable role in mitotic spindle regulation and coordination of mitotic processes. May have a preferential role in regulating neurogenesis. The polypeptide is Abnormal spindle-like microcephaly-associated protein homolog (ASPM) (Colobus guereza (Mantled guereza)).